A 780-amino-acid chain; its full sequence is ATP-dependent 6-phosphofructokinase, muscle type (780 aa).

An N-acetylthreonine modification is found at T2. The N-terminal catalytic PFK domain 1 stretch occupies residues 2-390; that stretch reads THEEHHAAKS…NWEVYKLLAH (389 aa). Residues G25, 88 to 89, and 118 to 121 contribute to the ATP site; these read RC and GDGS. Residue D119 coordinates Mg(2+). Residues 164 to 166, R201, 208 to 210, E264, R292, and 298 to 301 contribute to the substrate site; these read SID, MGR, and HVQR. Catalysis depends on D166, which acts as the Proton acceptor. Position 377 is a phosphoserine (S377). Positions 391-401 are interdomain linker; the sequence is VRPPVTKSGSY. Positions 402–780 are C-terminal regulatory PFK domain 2; it reads TVAVMNVGAP…TRKRSGEATI (379 aa). Beta-D-fructose 2,6-bisphosphate contacts are provided by residues R471 and 528-532; that span reads TVSNN. S530 carries O-linked (GlcNAc) serine glycosylation. K557 is modified (N6-(2-hydroxyisobutyryl)lysine). Residues R566, 573–575, E629, R655, and 661–664 each bind beta-D-fructose 2,6-bisphosphate; these read MGG and HMQQ. S667 bears the Phosphoserine mark. R735 is a beta-D-fructose 2,6-bisphosphate binding site. S775 carries the phosphoserine modification.

It belongs to the phosphofructokinase type A (PFKA) family. ATP-dependent PFK group I subfamily. Eukaryotic two domain clade 'E' sub-subfamily. Homo- and heterotetramers. Phosphofructokinase (PFK) enzyme functions as a tetramer composed of different combinations of 3 types of subunits, called PFKM (M), PFKL (L) and PFKP (P). The composition of the PFK tetramer differs according to the tissue type it is present in. The kinetic and regulatory properties of the tetrameric enzyme are dependent on the subunit composition, hence can vary across tissues. Interacts (via C-terminus) with HK1 (via N-terminal spermatogenic cell-specific region). Mg(2+) serves as cofactor. GlcNAcylation decreases enzyme activity.

It localises to the cytoplasm. The catalysed reaction is beta-D-fructose 6-phosphate + ATP = beta-D-fructose 1,6-bisphosphate + ADP + H(+). It functions in the pathway carbohydrate degradation; glycolysis; D-glyceraldehyde 3-phosphate and glycerone phosphate from D-glucose: step 3/4. Allosterically activated by ADP, AMP, or fructose 2,6-bisphosphate, and allosterically inhibited by ATP or citrate. In terms of biological role, catalyzes the phosphorylation of D-fructose 6-phosphate to fructose 1,6-bisphosphate by ATP, the first committing step of glycolysis. The protein is ATP-dependent 6-phosphofructokinase, muscle type (PFKM) of Sus scrofa (Pig).